A 370-amino-acid chain; its full sequence is ADP-ribosylhydrolase ARH3 (370 aa).

Positions 35, 66, and 67 each coordinate Mg(2+). D66 serves as a coordination point for substrate. Substrate is bound by residues 135 to 141 (RGSFGNG), H171, L225, and I261. D304, D306, and T307 together coordinate Mg(2+).

It belongs to the ADP-ribosylglycohydrolase family. Monomer. It depends on Mg(2+) as a cofactor.

It is found in the nucleus. Its subcellular location is the cytoplasm. The protein resides in the chromosome. It localises to the mitochondrion matrix. The catalysed reaction is [(1''-&gt;2')-ADP-alpha-D-ribose](n) + H2O = [(1''-&gt;2')-ADP-alpha-D-ribose](n-1) + ADP-D-ribose. It carries out the reaction 1''-O-acetyl-ADP-alpha-D-ribose + H2O = ADP-D-ribose + acetate + H(+). It catalyses the reaction O-(ADP-D-ribosyl)-L-seryl-[protein] + H2O = ADP-D-ribose + L-seryl-[protein]. The enzyme catalyses alpha-NAD(+) + H2O = ADP-D-ribose + nicotinamide + H(+). Its activity is regulated as follows. The protein undergoes a dramatic conformational switch from closed to open states upon substrate-binding, which enables specific substrate recognition for the 1''-O-linkage. The glutamate flap (Glu-35) blocks substrate entrance to Mg(2+) in the unliganded closed state. In presence of substrate, Glu-35 is ejected from the active site: this closed-to-open transition significantly widens the substrate-binding channel and precisely positions the scissile 1''-O-linkage for cleavage while securing tightly 2'- and 3'-hydroxyls of ADP-ribose. In terms of biological role, ADP-ribosylhydrolase that preferentially hydrolyzes the scissile alpha-O-linkage attached to the anomeric C1'' position of ADP-ribose and acts on different substrates, such as proteins ADP-ribosylated on serine and threonine, free poly(ADP-ribose) and O-acetyl-ADP-D-ribose. Specifically acts as a serine mono-ADP-ribosylhydrolase by mediating the removal of mono-ADP-ribose attached to serine residues on proteins, thereby playing a key role in DNA damage response. Serine ADP-ribosylation of proteins constitutes the primary form of ADP-ribosylation of proteins in response to DNA damage. Does not hydrolyze ADP-ribosyl-arginine, -cysteine, -diphthamide, or -asparagine bonds. Also able to degrade protein free poly(ADP-ribose), which is synthesized in response to DNA damage: free poly(ADP-ribose) acts as a potent cell death signal and its degradation by ADPRHL2 protects cells from poly(ADP-ribose)-dependent cell death, a process named parthanatos. Also hydrolyzes free poly(ADP-ribose) in mitochondria. Specifically digests O-acetyl-ADP-D-ribose, a product of deacetylation reactions catalyzed by sirtuins. Specifically degrades 1''-O-acetyl-ADP-D-ribose isomer, rather than 2''-O-acetyl-ADP-D-ribose or 3''-O-acetyl-ADP-D-ribose isomers. In Danio rerio (Zebrafish), this protein is ADP-ribosylhydrolase ARH3 (adprs).